A 248-amino-acid chain; its full sequence is MALLEICCYSMECALTAQRNGADRIELCAAPKEGGLTPSFGVLRSVREHITIPVHPIIRPRGGDFYYTDGEFAAMLEDIRLVRELGFPGLVTGVLTVDGDVDMSRMEKIMAAAGPLAVTFHRAFDMCANPFNALKNLADAGVARVLTSGQKADAAQGLSIIMELIAQGDAPIIMAGAGVRANNLQNFLDAGVREVHSSAGVLLPSPMRYRNQGLSMSADIQADEYSRYRVEGASVAEMKGIIVRHQAK.

The protein belongs to the CutC family. Homodimer.

It localises to the cytoplasm. The protein is PF03932 family protein CutC of Salmonella heidelberg (strain SL476).